Reading from the N-terminus, the 274-residue chain is MPELPEVETVCRGLEKLIIGKKISSIEIRYPKMIKTDLEEFQRELPSQIIESMGRRGKYLLFYLTDKVLISHLRMEGKYFYYPDQGPERKHAHVFFHFEDGGTLVYEDVRKFGTMELLVPDLLDVYFISKKLGPEPSEQDFDLQVFQSALAKSKKPIKSHLLDQTLVAGLGNIYVDEVLWRAQVHPARPSQTLTAEEATAIHDQTIAVLGQAVEKGGSTIRTYTNAFGEDGSMQDFHQVYDKTGQECVRCGTIIEKIQLGGRGTHFCPNCQRRD.

Catalysis depends on proline 2, which acts as the Schiff-base intermediate with DNA. The active-site Proton donor is the glutamate 3. Catalysis depends on lysine 58, which acts as the Proton donor; for beta-elimination activity. 2 residues coordinate DNA: histidine 91 and arginine 110. Residues 238-272 (QVYDKTGQECVRCGTIIEKIQLGGRGTHFCPNCQR) form an FPG-type zinc finger. Residue arginine 262 is the Proton donor; for delta-elimination activity of the active site.

Belongs to the FPG family. Monomer. It depends on Zn(2+) as a cofactor.

It catalyses the reaction Hydrolysis of DNA containing ring-opened 7-methylguanine residues, releasing 2,6-diamino-4-hydroxy-5-(N-methyl)formamidopyrimidine.. It carries out the reaction 2'-deoxyribonucleotide-(2'-deoxyribose 5'-phosphate)-2'-deoxyribonucleotide-DNA = a 3'-end 2'-deoxyribonucleotide-(2,3-dehydro-2,3-deoxyribose 5'-phosphate)-DNA + a 5'-end 5'-phospho-2'-deoxyribonucleoside-DNA + H(+). Involved in base excision repair of DNA damaged by oxidation or by mutagenic agents. Acts as a DNA glycosylase that recognizes and removes damaged bases. Has a preference for oxidized purines, such as 7,8-dihydro-8-oxoguanine (8-oxoG). Has AP (apurinic/apyrimidinic) lyase activity and introduces nicks in the DNA strand. Cleaves the DNA backbone by beta-delta elimination to generate a single-strand break at the site of the removed base with both 3'- and 5'-phosphates. This is Formamidopyrimidine-DNA glycosylase from Streptococcus pneumoniae serotype 4 (strain ATCC BAA-334 / TIGR4).